Here is a 419-residue protein sequence, read N- to C-terminus: Enolase (419 aa).

Residue Gln161 coordinates (2R)-2-phosphoglycerate. Glu205 functions as the Proton donor in the catalytic mechanism. The Mg(2+) site is built by Asp240, Glu283, and Asp309. Residues Lys334, Arg363, Ser364, and Lys385 each coordinate (2R)-2-phosphoglycerate. The Proton acceptor role is filled by Lys334.

This sequence belongs to the enolase family. The cofactor is Mg(2+).

The protein localises to the cytoplasm. The protein resides in the secreted. It is found in the cell surface. The catalysed reaction is (2R)-2-phosphoglycerate = phosphoenolpyruvate + H2O. It participates in carbohydrate degradation; glycolysis; pyruvate from D-glyceraldehyde 3-phosphate: step 4/5. In terms of biological role, catalyzes the reversible conversion of 2-phosphoglycerate (2-PG) into phosphoenolpyruvate (PEP). It is essential for the degradation of carbohydrates via glycolysis. The sequence is that of Enolase from Saccharolobus islandicus (strain L.S.2.15 / Lassen #1) (Sulfolobus islandicus).